Consider the following 117-residue polypeptide: GLIGSPVATYAAAPVAVAKTVVADEYDPHPQYQYGYDVQDGLTGDSKSQIESRSGDVVQGSYSLVDPDGTRRTVEYTADPINGFNAVVHREPLVAKAVVAAHAPVVHAAPVAKIAHF.

Copy 1 of the repeat occupies 12-15 (AAPV). One can recognise a Chitin-binding type R&amp;R domain in the interval 29–95 (HPQYQYGYDV…AVVHREPLVA (67 aa)). Copy 2 of the repeat occupies 108-111 (AAPV).

Component of the cuticle of the larva of Tenebrio molitor. This Tenebrio molitor (Yellow mealworm beetle) protein is Larval cuticle protein A2B.